A 351-amino-acid polypeptide reads, in one-letter code: Fructose-1,6-bisphosphatase class 1 (351 aa).

Mg(2+) is bound by residues glutamate 94, aspartate 113, leucine 115, and aspartate 116. Residues 116–119 (DGSS) and asparagine 207 contribute to the substrate site. Position 279 (glutamate 279) interacts with Mg(2+).

The protein belongs to the FBPase class 1 family. In terms of assembly, homotetramer. Mg(2+) is required as a cofactor.

The protein resides in the cytoplasm. It carries out the reaction beta-D-fructose 1,6-bisphosphate + H2O = beta-D-fructose 6-phosphate + phosphate. It participates in carbohydrate biosynthesis; gluconeogenesis. This Methylobacterium radiotolerans (strain ATCC 27329 / DSM 1819 / JCM 2831 / NBRC 15690 / NCIMB 10815 / 0-1) protein is Fructose-1,6-bisphosphatase class 1.